Reading from the N-terminus, the 410-residue chain is Cysteine desulfurase IscS (410 aa).

Pyridoxal 5'-phosphate contacts are provided by residues 79-80 (AT), Asn159, Gln187, and 207-209 (SGH). Lys210 is subject to N6-(pyridoxal phosphate)lysine. Thr248 contributes to the pyridoxal 5'-phosphate binding site. The Cysteine persulfide intermediate role is filled by Cys334. Cys334 lines the [2Fe-2S] cluster pocket.

This sequence belongs to the class-V pyridoxal-phosphate-dependent aminotransferase family. NifS/IscS subfamily. In terms of assembly, homodimer. Forms a heterotetramer with IscU, interacts with other sulfur acceptors. It depends on pyridoxal 5'-phosphate as a cofactor.

The protein resides in the cytoplasm. It catalyses the reaction (sulfur carrier)-H + L-cysteine = (sulfur carrier)-SH + L-alanine. Its pathway is cofactor biosynthesis; iron-sulfur cluster biosynthesis. Master enzyme that delivers sulfur to a number of partners involved in Fe-S cluster assembly, tRNA modification or cofactor biosynthesis. Catalyzes the removal of elemental sulfur atoms from cysteine to produce alanine. Functions as a sulfur delivery protein for Fe-S cluster synthesis onto IscU, an Fe-S scaffold assembly protein, as well as other S acceptor proteins. In Ehrlichia chaffeensis (strain ATCC CRL-10679 / Arkansas), this protein is Cysteine desulfurase IscS.